The chain runs to 557 residues: Large cysteine-rich periplasmic protein omcB (557 aa).

The N-terminal stretch at 1-22 is a signal peptide; that stretch reads MSKLIRRVVTVLALTSMASSFA. Positions 23 to 40 are excised as a propeptide; that stretch reads SGKIEAAAAESLATRFIA.

In terms of assembly, part of a disulfide cross-linked outer membrane complex (COMC) composed of the major outer membrane porin (MOMP), the small cysteine-rich protein (omcA) and the large cysteine-rich periplasmic protein (omcB).

It localises to the periplasm. In terms of biological role, in elementary bodies (EBs, the infectious stage, which is able to survive outside the host cell) provides the structural integrity of the outer envelope through disulfide cross-links with the small cysteine-rich protein and the major outer membrane porin. It has been described in publications as the Sarkosyl-insoluble COMC (Chlamydia outer membrane complex), and serves as the functional equivalent of peptidoglycan. The polypeptide is Large cysteine-rich periplasmic protein omcB (omcB) (Chlamydophila psittaci (strain ATCC VR-125 / 6BC) (Chlamydia psittaci)).